Here is a 176-residue protein sequence, read N- to C-terminus: Disulfide bond formation protein B (176 aa).

Residues 1-14 lie on the Cytoplasmic side of the membrane; the sequence is MLRFLNQCSRGRGA. The chain crosses the membrane as a helical span at residues 15–31; it reads WLLMAFTALALEMVALW. At 32–49 the chain is on the periplasmic side; sequence FQHVMLLKPCVLCIYERC. C41 and C44 are joined by a disulfide. A helical membrane pass occupies residues 50–65; the sequence is ALFGVMGAGLVGAIAP. Residues 66–71 lie on the Cytoplasmic side of the membrane; that stretch reads KTPLRY. The chain crosses the membrane as a helical span at residues 72 to 89; it reads VAMVIWIYSAWRGLQLAY. Over 90–144 the chain is Periplasmic; sequence EHTMIQLHPSPFMTCDFMARFPDWLPLGKWLPQVFVASGDCAERQWSFLTLEMPQ. C104 and C130 form a disulfide bridge. A helical transmembrane segment spans residues 145-163; that stretch reads WLLGIFAAYLVVAIAVVIA. Topologically, residues 164–176 are cytoplasmic; it reads QAFKPKKRDLFGR.

It belongs to the DsbB family.

The protein resides in the cell inner membrane. Required for disulfide bond formation in some periplasmic proteins. Acts by oxidizing the DsbA protein. In Salmonella paratyphi A (strain ATCC 9150 / SARB42), this protein is Disulfide bond formation protein B.